Reading from the N-terminus, the 78-residue chain is D-alanyl carrier protein (78 aa).

Residues 1-78 form the Carrier domain; sequence MEFREQVLDL…KIVEVLEELR (78 aa). Residue Ser36 is modified to O-(pantetheine 4'-phosphoryl)serine.

Belongs to the DltC family. In terms of processing, 4'-phosphopantetheine is transferred from CoA to a specific serine of apo-DCP.

The protein resides in the cytoplasm. It functions in the pathway cell wall biogenesis; lipoteichoic acid biosynthesis. Carrier protein involved in the D-alanylation of lipoteichoic acid (LTA). The loading of thioester-linked D-alanine onto DltC is catalyzed by D-alanine--D-alanyl carrier protein ligase DltA. The DltC-carried D-alanyl group is further transferred to cell membrane phosphatidylglycerol (PG) by forming an ester bond, probably catalyzed by DltD. D-alanylation of LTA plays an important role in modulating the properties of the cell wall in Gram-positive bacteria, influencing the net charge of the cell wall. This Staphylococcus xylosus protein is D-alanyl carrier protein.